A 756-amino-acid polypeptide reads, in one-letter code: ATP-dependent zinc metalloprotease FtsH (756 aa).

Residues 1-44 (MGVPAGMPHPNGLQPQRKDKALAQNPNTPQKGSEAFLKKLIHSS) are Cytoplasmic-facing. The helical transmembrane segment at 45–65 (WFFPGAAIVVMLGFLMASFFT) threads the bilayer. The Extracellular portion of the chain corresponds to 66-148 (QPSRQVDTNV…SYTDQPVEHS (83 aa)). The helical transmembrane segment at 149-169 (FLGSLVSLLLPILLFGVLFWF) threads the bilayer. The Cytoplasmic segment spans residues 170–756 (LMGRVGGGSS…NQNGAENERG (587 aa)). 241 to 248 (GPPGTGKT) contributes to the ATP binding site. Histidine 463 serves as a coordination point for Zn(2+). Glutamate 464 is a catalytic residue. The Zn(2+) site is built by histidine 467 and aspartate 539. Composition is skewed to basic and acidic residues over residues 647–662 (PERE…ERTD) and 672–681 (LAKEAEKSEE). The segment at 647 to 756 (PEREHWYSKP…NQNGAENERG (110 aa)) is disordered. 2 stretches are compositionally biased toward low complexity: residues 684 to 703 (AEAP…VPVA) and 713 to 724 (PLTDPDADPTVA). The segment covering 744-756 (GTPNQNGAENERG) has biased composition (polar residues).

It in the central section; belongs to the AAA ATPase family. The protein in the C-terminal section; belongs to the peptidase M41 family. Homohexamer. The cofactor is Zn(2+).

The protein localises to the cell membrane. Its function is as follows. Acts as a processive, ATP-dependent zinc metallopeptidase for both cytoplasmic and membrane proteins. Plays a role in the quality control of integral membrane proteins. The chain is ATP-dependent zinc metalloprotease FtsH from Rothia mucilaginosa (strain DY-18) (Stomatococcus mucilaginosus).